Consider the following 349-residue polypeptide: Anthranilate phosphoribosyltransferase (349 aa).

5-phospho-alpha-D-ribose 1-diphosphate is bound by residues Gly81, 84–85 (GD), Thr89, 91–94 (NVST), 109–117 (KHGNRAASS), and Ala121. Anthranilate is bound at residue Gly81. Position 93 (Ser93) interacts with Mg(2+). Residue Asn112 coordinates anthranilate. Residue Arg167 coordinates anthranilate. Asp226 and Glu227 together coordinate Mg(2+).

The protein belongs to the anthranilate phosphoribosyltransferase family. As to quaternary structure, homodimer. It depends on Mg(2+) as a cofactor.

The enzyme catalyses N-(5-phospho-beta-D-ribosyl)anthranilate + diphosphate = 5-phospho-alpha-D-ribose 1-diphosphate + anthranilate. The protein operates within amino-acid biosynthesis; L-tryptophan biosynthesis; L-tryptophan from chorismate: step 2/5. Functionally, catalyzes the transfer of the phosphoribosyl group of 5-phosphorylribose-1-pyrophosphate (PRPP) to anthranilate to yield N-(5'-phosphoribosyl)-anthranilate (PRA). The protein is Anthranilate phosphoribosyltransferase of Methylocella silvestris (strain DSM 15510 / CIP 108128 / LMG 27833 / NCIMB 13906 / BL2).